The following is a 465-amino-acid chain: Citrate synthase-like protein (465 aa).

The interval 13-40 (HISDMVDSTKMNGNQSQDTAGRADTPVS) is disordered. Residues 21 to 31 (TKMNGNQSQDT) show a composition bias toward polar residues. Catalysis depends on residues His-357 and Asp-413.

The protein belongs to the citrate synthase family.

It participates in secondary metabolite biosynthesis. Its function is as follows. Citrate synthase-like protein; part of the gene cluster that mediates the biosynthesis of squalestatin S1 (SQS1, also known as zaragozic acid A), a heavily oxidized fungal polyketide that offers potent cholesterol lowering activity by targeting squalene synthase (SS). SQS1 is composed of a 2,8-dioxobicyclic[3.2.1]octane-3,4,5-tricarboxyclic acid core that is connected to two lipophilic polyketide arms. These initial steps feature the priming of an unusual benzoic acid starter unit onto the highly reducing polyketide synthase pks2, followed by oxaloacetate extension and product release to generate a tricarboxylic acid containing product. The phenylalanine ammonia lyase (PAL) M7 and the acyl-CoA ligase M9 are involved in transforming phenylalanine into benzoyl-CoA. The citrate synthase-like protein R3 is involved in connecting the C-alpha-carbons of the hexaketide chain and oxaloacetate to afford the tricarboxylic acid unit. The potential hydrolytic enzymes, M8 and M10, are in close proximity to pks2 and may participate in product release. On the other side, the tetraketide arm is synthesized by a the squalestatin tetraketide synthase pks1 and enzymatically esterified to the core in the last biosynthetic step, by the acetyltransferase M4. The biosynthesis of the tetraketide must involve 3 rounds of chain extension. After the first and second rounds methyl-transfer occurs, and in all rounds of extension the ketoreductase and dehydratase are active. The enoyl reductase and C-MeT of pks1 are not active in the final round of extension. The acetyltransferase M4 appears to have a broad substrate selectivity for its acyl CoA substrate, allowing the in vitro synthesis of novel squalestatins. The biosynthesis of SQS1 requires several oxidative steps likely performed by oxidoreductases M1, R1 and R2. Finally, in support of the identification of the cluster as being responsible for SQS1 production, the cluster contains a gene encoding a putative squalene synthase (SS) R6, suggesting a likely mechanism for self-resistance. The polypeptide is Citrate synthase-like protein (Phoma sp. (strain ATCC 20986 / MF5453)).